The primary structure comprises 306 residues: MNMSNMAIDLVGVRKSFGDKVIVNDLSFSVARGECFGLLGPNGAGKSTIARMLLGMISPDRGKITVLDEPVPSRARAARVRVGVVPQFDNLEPEFTVRENLLVFGRYFGMSARTIEAVVPSLLEFARLESKADVRVSLLSGGMKRRLTLARALINDPHLLVMDEPTTGLDPHARHLIWERLRALLARGKTILLTTHFMEEAERLCDRLCVLESGCKIAEGKPDALIDEHIGCNVIEIYGGDLDQLRELIRPYARHIEVSGETLFCYARCPDEISVHLRGRTDLRVLQRPPNLEDVFLRLTGREMEK.

An ABC transporter domain is found at Ile-8–Tyr-238. Position 40 to 47 (Gly-40 to Ser-47) interacts with ATP.

The protein belongs to the ABC transporter superfamily. Lipooligosaccharide exporter (TC 3.A.1.102) family. The complex is composed of two ATP-binding proteins (NodI) and two transmembrane proteins (NodJ).

It is found in the cell inner membrane. In terms of biological role, part of the ABC transporter complex NodIJ involved in the export of the nodulation factors (Nod factors), the bacterial signal molecules that induce symbiosis and subsequent nodulation induction. Nod factors are LCO (lipo-chitin oligosaccharide), a modified beta-1,4-linked N-acetylglucosamine oligosaccharide. This subunit is responsible for energy coupling to the transport system. The sequence is that of Nod factor export ATP-binding protein I from Bradyrhizobium diazoefficiens (strain JCM 10833 / BCRC 13528 / IAM 13628 / NBRC 14792 / USDA 110).